We begin with the raw amino-acid sequence, 454 residues long: MVFCLSSEEPRRPLRSDMVHFQASEVQQLLHNKFVVILGDSIQRAVYKDLVLLLQKDSLLTAAQLKAKGELSFEQDQLVAGGQLGELHNGTQYREVRQFCSGSGHHLVRFYFLTRVYSEYLEDVLEELTYGPAPDLVIINSCLWDLSRYGRCSMESYRENLERVFVRMDQVLPDSCLLVWNMAMPLGERITGGFLLPELQPLAGSLRRDVVEGNFYSATLAGDHCFDVLDLHFHFRHAVQHRHRDGVHWDQHAHRHLSHLLLTHVADAWGVELPKRGYPPDPWIEDWAEMNHPFQGSHRQTPDFGEHLALLPPPPSSLPPPMPFPYPLPQPSPPPLFPPLPQDTPFFPGQPFPPHEFFNYNPVEDFSMPPHLGCGPGVNFVPGPLPPPIPGPNPHGQHWGPVVHRGMPRYVPNSPYHVRRMGGPCRQRLRHSERLIHTYKLDRRPPAHSGTWPG.

The protein belongs to the PC-esterase family.

The protein is PC-esterase domain-containing protein 1A (PCED1A) of Homo sapiens (Human).